The sequence spans 210 residues: Probable nicotinate-nucleotide adenylyltransferase (210 aa).

It belongs to the NadD family.

It catalyses the reaction nicotinate beta-D-ribonucleotide + ATP + H(+) = deamido-NAD(+) + diphosphate. Its pathway is cofactor biosynthesis; NAD(+) biosynthesis; deamido-NAD(+) from nicotinate D-ribonucleotide: step 1/1. Functionally, catalyzes the reversible adenylation of nicotinate mononucleotide (NaMN) to nicotinic acid adenine dinucleotide (NaAD). The sequence is that of Probable nicotinate-nucleotide adenylyltransferase from Streptococcus pyogenes serotype M18 (strain MGAS8232).